The chain runs to 212 residues: ATP-dependent Clp protease proteolytic subunit (212 aa).

Serine 112 acts as the Nucleophile in catalysis. Histidine 137 is an active-site residue.

It belongs to the peptidase S14 family. In terms of assembly, fourteen ClpP subunits assemble into 2 heptameric rings which stack back to back to give a disk-like structure with a central cavity, resembling the structure of eukaryotic proteasomes.

Its subcellular location is the cytoplasm. The enzyme catalyses Hydrolysis of proteins to small peptides in the presence of ATP and magnesium. alpha-casein is the usual test substrate. In the absence of ATP, only oligopeptides shorter than five residues are hydrolyzed (such as succinyl-Leu-Tyr-|-NHMec, and Leu-Tyr-Leu-|-Tyr-Trp, in which cleavage of the -Tyr-|-Leu- and -Tyr-|-Trp bonds also occurs).. In terms of biological role, cleaves peptides in various proteins in a process that requires ATP hydrolysis. Has a chymotrypsin-like activity. Plays a major role in the degradation of misfolded proteins. The protein is ATP-dependent Clp protease proteolytic subunit of Thiobacillus denitrificans (strain ATCC 25259 / T1).